A 138-amino-acid polypeptide reads, in one-letter code: rRNA methyltransferase 1, mitochondrial (138 aa).

A mitochondrion-targeting transit peptide spans 1-21 (MNNQPCSIVWRRFLTSKVKPA). The disordered stretch occupies residues 92 to 113 (KQDILSSKRQQEEHKSKYSRKS).

The protein belongs to the class IV-like SAM-binding methyltransferase superfamily. RNA methyltransferase TrmH family.

It is found in the mitochondrion. It carries out the reaction a guanosine in 21S rRNA + S-adenosyl-L-methionine = a 2'-O-methylguanosine in 21S rRNA + S-adenosyl-L-homocysteine + H(+). Functionally, S-adenosyl-L-methionine-dependent 2'-O-ribose methyltransferase that catalyzes the formation of the 2'-O-methylguanosine corresponding to position 2270 in S.cerevisiae 21S mitochondrial large ribosomal RNA, a universally conserved modification in the peptidyl transferase domain of the 21S rRNA. The sequence is that of rRNA methyltransferase 1, mitochondrial from Lachancea kluyveri (strain ATCC 58438 / CBS 3082 / BCRC 21498 / NBRC 1685 / JCM 7257 / NCYC 543 / NRRL Y-12651) (Yeast).